We begin with the raw amino-acid sequence, 162 residues long: UPF0260 protein CC_3276 (162 aa).

Belongs to the UPF0260 family.

This chain is UPF0260 protein CC_3276, found in Caulobacter vibrioides (strain ATCC 19089 / CIP 103742 / CB 15) (Caulobacter crescentus).